The following is a 313-amino-acid chain: N-acetyl-gamma-glutamyl-phosphate reductase 2 (313 aa).

Cys-117 is an active-site residue.

Belongs to the NAGSA dehydrogenase family. Type 2 subfamily.

The protein resides in the cytoplasm. It catalyses the reaction N-acetyl-L-glutamate 5-semialdehyde + phosphate + NADP(+) = N-acetyl-L-glutamyl 5-phosphate + NADPH + H(+). Its pathway is amino-acid biosynthesis; L-arginine biosynthesis; N(2)-acetyl-L-ornithine from L-glutamate: step 3/4. Catalyzes the NADPH-dependent reduction of N-acetyl-5-glutamyl phosphate to yield N-acetyl-L-glutamate 5-semialdehyde. The chain is N-acetyl-gamma-glutamyl-phosphate reductase 2 from Pseudomonas putida (strain ATCC 47054 / DSM 6125 / CFBP 8728 / NCIMB 11950 / KT2440).